A 287-amino-acid chain; its full sequence is NAD-dependent protein deacylase sir-2.3 (287 aa).

A Deacetylase sirtuin-type domain is found at 10–287 (TELCENSLKK…YRISDVLKEM (278 aa)). NAD(+)-binding positions include 35–55 (GAGI…VGLY) and 116–119 (QNVD). H134 functions as the Proton acceptor in the catalytic mechanism. The Zn(2+) site is built by C142, C145, C196, and C199. NAD(+) contacts are provided by residues 236–238 (GTS), 262–264 (NIG), and I280.

The protein belongs to the sirtuin family. Class II subfamily. As to quaternary structure, interacts with pyc-1, pcca-1 and mccc-1. Zn(2+) is required as a cofactor. As to expression, ubiquitously expressed with high expression in the pharynx, body wall muscles and gonad. Strong expression in a subset of non-neuronal cells in the head.

It localises to the mitochondrion matrix. It is found in the mitochondrion. It catalyses the reaction N(6)-acetyl-L-lysyl-[protein] + NAD(+) + H2O = 2''-O-acetyl-ADP-D-ribose + nicotinamide + L-lysyl-[protein]. Functionally, NAD-dependent protein deacylase. Catalyzes the NAD-dependent hydrolysis of acyl groups from lysine residues. Plays a role in oxidative stress resistance. Might promote neuronal cell death under ischemic conditions and cell death in touch neurons induced by mec-4 channel hyperactivation, possibly downstream of the insulin-like receptor daf-2. Might attenuate the reactive oxygen species (ROS) scavenging system, that eliminates ROS in ischemic conditions, under dietary deprivation and when glycolysis is blocked. This chain is NAD-dependent protein deacylase sir-2.3 (sir-2.3), found in Caenorhabditis elegans.